The chain runs to 1099 residues: MGSSIFLGLQPSPSHWLKSSVVIHEDAPTMFYGTQLIMSPPTKNKLKRQSQLLSTMLSRTLSYKYRDLDSTFCSLGASDDPSELSTQLSAPGVLKVFGDSVCTGTHYKSVLATGSSSAQELVKEALERYALDPECAGQYVLCDVVGQAGDSGQRWQAQCFRVFGDNEKPLLIQELWKPREGLSRRFELRKKSDVEELASRDVDTTTAGINAQARRLQRIRAKGTPALTSEAAQSSPPTRLRRTVSETSLSPAPSLPEAAQRPEEPVPEAMRYSLYQCPHLLLLQGYSQQHDSLVYVLSKERHTVGQRTPSSKPSISLSAPDILPLHCTIRRHQSPEGGPAGTRLVLEPITGASVSVNFSEVGRNPVVLQHGDLLSLGLYYLLLFKDPGQAQPLPACALARLGAAPQSCRMCGAVLRARGAPSLPAAVVRRRSLLLEFEPDVEDTLLQRIMTLIEPGGDDHKLTPAFLLCLCIQHSAMHFQPGTFRHLLLKISKRVRDTVWEKTKELAEKQAQLQEPISWASFPMADLVPDLQHILFWMSNSIELLYFIQQKSPLYVQSMEEELDVTGSKESLFSCTLTASEEAMAALEEVVLYAFQQCVYYLSKCLYVCLPALLECPPFQTERRESWRSGPALPEELRRVVSVFQATLDLLQQLQMHPEVASQMLAYLFFFSGTLLLNQVLDKGPSLSCFHWPRGVQVCARLQQFLEWARSAGLGAPAERFFRKLSCTLHLLATPRAQLIQMSWATLRVTFPALNPAQLHRLLTQYQLASAMGPVSAWEPGAPDGPEAFQSEDILESYENPPPIVLPSQGFQVDLEADCVEDSIYQHLLYIRHFLWGLRGQASPDSGPAQPESIEGLYHTIPEGHLEGHGCPLANRDPGRVAVETAPPHSLPVTGAPRAQGPPGRQPTRGDRRGSQAGSLHTDSSCMLTPPSTPLGLEPAGPSWPEPSGLCGRAVLDGQRNGPGGLPGAVLEGDAIQDAEPPAEASSPSSSAEDFCYVFMVELERGPSGLGMGLIDGMHTPLGAQGLYIQTLLPGSPAASDGRLSLGDQILEVNGSSLRGVSYMRAVDLIRHGGKKMRFLVAKSDMETAKKIRFRNPPS.

The Ras-associating domain maps to Ala-90 to Asp-193. The interval Ala-221–Pro-265 is disordered. Over residues Ala-226–Pro-237 the composition is skewed to polar residues. Phosphoserine occurs at positions 235, 245, 248, and 250. In terms of domain architecture, FHA spans His-302–Gly-377. Ser-422 and Ser-432 each carry phosphoserine. Positions Ala-525–Glu-792 constitute a Dilute domain. The disordered stretch occupies residues Gly-868 to Gly-941. A Phosphoserine modification is found at Ser-915. The segment covering Gln-916–Met-927 has biased composition (polar residues). The region spanning Met-1000–Asp-1085 is the PDZ domain.

Belongs to the RADIL family. Interacts with RAP1A; in a GTP-dependent manner. Does not interact with members of the Ras family. Interacts (via PDZ domain) with KIF14; is recruited to the microtubule network restricting its interaction with activated RAP1A.

In terms of biological role, downstream effector of Rap required for cell adhesion and migration of neural crest precursors during development. This Mus musculus (Mouse) protein is Ras-associating and dilute domain-containing protein (Radil).